The sequence spans 353 residues: Outer membrane protein A (353 aa).

Residues 1–21 (MKKTAIALAVALVGFATVAQA) form the signal peptide. The next 8 membrane-spanning stretches (beta stranded) occupy residues 27–37 (TWYTGGKLGWS), 56–67 (QLGAGAFFGYQA), 71–79 (LGFEMGYDW), 97–108 (QGVQLAAKLSYP), 113–121 (LDVYTRLGG), 148–157 (PLVALGAEYA), 162–169 (WATRMEYQ), and 188–196 (LLSVGVSYR). 4 tandem repeats follow at residues 208–209 (AP), 210–211 (TP), 212–213 (AP), and 214–215 (AP). The segment at 208–215 (APTPAPAP) is 4 X 2 AA approximate tandem repeats of A-P. The OmpA-like domain maps to 217–345 (VDTKRFTLKS…RVEIEVKGYK (129 aa)). A disulfide bridge connects residues cysteine 318 and cysteine 330.

The protein belongs to the outer membrane OOP (TC 1.B.6) superfamily. OmpA family. Monomer and homodimer.

It is found in the cell outer membrane. With TolR probably plays a role in maintaining the position of the peptidoglycan cell wall in the periplasm. Acts as a porin with low permeability that allows slow penetration of small solutes; an internal gate slows down solute passage. The polypeptide is Outer membrane protein A (Yersinia pseudotuberculosis serotype I (strain IP32953)).